Consider the following 412-residue polypeptide: CCA-adding enzyme (412 aa).

Residues S41 and K44 each contribute to the ATP site. Positions 41 and 44 each coordinate CTP. Mg(2+) contacts are provided by D53, D55, and D106. Positions 129, 149, and 158 each coordinate ATP. CTP-binding residues include H129, K149, and Y158.

This sequence belongs to the tRNA nucleotidyltransferase/poly(A) polymerase family. Archaeal CCA-adding enzyme subfamily. Homodimer. Mg(2+) is required as a cofactor.

The catalysed reaction is a tRNA precursor + 2 CTP + ATP = a tRNA with a 3' CCA end + 3 diphosphate. It carries out the reaction a tRNA with a 3' CCA end + 2 CTP + ATP = a tRNA with a 3' CCACCA end + 3 diphosphate. Its function is as follows. Catalyzes the addition and repair of the essential 3'-terminal CCA sequence in tRNAs without using a nucleic acid template. Adds these three nucleotides in the order of C, C, and A to the tRNA nucleotide-73, using CTP and ATP as substrates and producing inorganic pyrophosphate. tRNA 3'-terminal CCA addition is required both for tRNA processing and repair. Also involved in tRNA surveillance by mediating tandem CCA addition to generate a CCACCA at the 3' terminus of unstable tRNAs. While stable tRNAs receive only 3'-terminal CCA, unstable tRNAs are marked with CCACCA and rapidly degraded. In Saccharolobus islandicus (strain Y.N.15.51 / Yellowstone #2) (Sulfolobus islandicus), this protein is CCA-adding enzyme.